A 335-amino-acid polypeptide reads, in one-letter code: Glutaredoxin-3 (335 aa).

The residue at position 2 (alanine 2) is an N-acetylalanine. The 116-residue stretch at 2–117 (AAGAAEAAVA…LTKKVQRHAS (116 aa)) folds into the Thioredoxin domain. Phosphoserine is present on residues serine 117 and serine 120. Glutaredoxin domains lie at 144 to 236 (APCM…PKLE) and 237 to 335 (ERLK…RGEN). [2Fe-2S] cluster-binding residues include cysteine 159 and cysteine 261.

In terms of assembly, homodimer; the homodimer is independent of 2Fe-2S clusters. Heterotrimer; forms a heterotrimeric complex composed by two BOLA2 molecules and one GLRX3 molecule; linked by [2Fe-2S] clusters. Interacts (via N-terminus) with PRKCQ/PKC-theta. Interacts (via C-terminus) with CSRP3. Interacts with CSRP2. Expressed in heart, spleen, testis and, to a lower extent, in thymus and peripheral blood leukocytes. Weakly expressed in lung, placenta, colon and small intestine.

It is found in the cytoplasm. The protein resides in the cytosol. The protein localises to the cell cortex. Its subcellular location is the myofibril. It localises to the sarcomere. It is found in the z line. Together with BOLA2, acts as a cytosolic iron-sulfur (Fe-S) cluster assembly factor that facilitates [2Fe-2S] cluster insertion into a subset of cytosolic proteins. Acts as a critical negative regulator of cardiac hypertrophy and a positive inotropic regulator. Required for hemoglobin maturation. Does not possess any thyoredoxin activity since it lacks the conserved motif that is essential for catalytic activity. This chain is Glutaredoxin-3 (GLRX3), found in Homo sapiens (Human).